A 1039-amino-acid polypeptide reads, in one-letter code: L-arabinokinase (1039 aa).

Residues 662–678 (AAYVAGTILVLMIELGV) traverse the membrane as a helical segment. 693–703 (PEGKGVSSSAA) is an ATP binding site. Catalysis depends on Asp-745, which acts as the Proton acceptor.

It belongs to the GHMP kinase family.

Its subcellular location is the membrane. The enzyme catalyses L-arabinose + ATP = beta-L-arabinose 1-phosphate + ADP + H(+). In terms of biological role, arabinose kinase. Involved in the salvage pathway which converts free L-arabinose to UDP-L-arabinose. May play a role in arabinose transport. This is L-arabinokinase (ARA1) from Arabidopsis thaliana (Mouse-ear cress).